Reading from the N-terminus, the 228-residue chain is uncharacterized protein (228 aa).

A signal peptide spans 1-15 (MKQKYLFIASMALAG). Cysteine 16 carries N-palmitoyl cysteine lipidation. The S-diacylglycerol cysteine moiety is linked to residue cysteine 16.

To P.multocida PM0015.

The protein resides in the cell membrane. This is an uncharacterized protein from Pasteurella multocida (strain Pm70).